The sequence spans 413 residues: Elongation factor 1-alpha (413 aa).

Residues 1-7, 77-81, and 139-142 contribute to the GTP site; these read HVDSGKS, DAPGH, and NKMD. The tr-type G domain maps to 1 to 228; the sequence is HVDSGKSTTT…DAILPPARPT (228 aa). Glu287 and Glu360 each carry 5-glutamyl glycerylphosphorylethanolamine.

It belongs to the TRAFAC class translation factor GTPase superfamily. Classic translation factor GTPase family. EF-Tu/EF-1A subfamily.

It localises to the cytoplasm. Functionally, this protein promotes the GTP-dependent binding of aminoacyl-tRNA to the A-site of ribosomes during protein biosynthesis. The sequence is that of Elongation factor 1-alpha from Heliocheilus albipunctella (Millet head miner).